The sequence spans 651 residues: Probable inactive purple acid phosphatase 9 (651 aa).

A signal peptide spans 1 to 20; that stretch reads MIAAVYTLFFFFLLISSVYS. Asn32, Asn96, and Asn202 each carry an N-linked (GlcNAc...) asparagine glycan. Asp305 and Tyr308 together coordinate Fe cation. Asp305 contributes to the Zn(2+) binding site. Zn(2+) is bound at residue Asn338. Asn338 is a substrate binding site. N-linked (GlcNAc...) asparagine glycans are attached at residues Asn378 and Asn432. His444 is a binding site for Zn(2+). Asn475 carries an N-linked (GlcNAc...) asparagine glycan. His483 is a Zn(2+) binding site. Substrate is bound at residue 483–485; the sequence is HVH. His485 is a Fe cation binding site. Asn495 and Asn640 each carry an N-linked (GlcNAc...) asparagine glycan.

This sequence belongs to the metallophosphoesterase superfamily. Purple acid phosphatase family. Homodimer. It depends on Fe cation as a cofactor. Requires Zn(2+) as cofactor. Expressed in roots, stems, leaves, flowers and siliques.

The protein resides in the secreted. The sequence is that of Probable inactive purple acid phosphatase 9 (PAP9) from Arabidopsis thaliana (Mouse-ear cress).